Here is a 152-residue protein sequence, read N- to C-terminus: Deoxyuridine 5'-triphosphate nucleotidohydrolase (152 aa).

Substrate is bound by residues 71–73 (RSG), Asn-84, 88–90 (LVD), and Met-98.

Belongs to the dUTPase family. It depends on Mg(2+) as a cofactor.

It catalyses the reaction dUTP + H2O = dUMP + diphosphate + H(+). It functions in the pathway pyrimidine metabolism; dUMP biosynthesis; dUMP from dCTP (dUTP route): step 2/2. Its function is as follows. This enzyme is involved in nucleotide metabolism: it produces dUMP, the immediate precursor of thymidine nucleotides and it decreases the intracellular concentration of dUTP so that uracil cannot be incorporated into DNA. The chain is Deoxyuridine 5'-triphosphate nucleotidohydrolase from Shewanella oneidensis (strain ATCC 700550 / JCM 31522 / CIP 106686 / LMG 19005 / NCIMB 14063 / MR-1).